A 734-amino-acid chain; its full sequence is MDIELFLSNYNIANGTSSTTANNSKFQPKIKVKLVVESGSSTYEKSLESTNDQLKPLIIKLNNKIKKYEESLNKKNFVTPNKQSSSSMNLLQKSSTVNLSSPSLSQIGLTHHASLKNLQITTSPDIQQPPSVPSNPIVFGISLDTLIAKEKSMELRIPTFVSNILNTLFLHSLGVEGLFRISGSQMEIQNRRGIVNLGDYSTSRDDNPHVLTVLLKQFLRDLPEPICTNALYDLFLAASDQINFQQCKENGFEVLKKLINSNLPVNNRNLLQHLIHFLRFVAMNQTVNLMGPSNLSRVFGPNLFWKKETGPLDIQILQSTSEKVNFITEQMILHYDTLFEEPLQTTSPAVLSNTPINSNPASIPTFNFGGKKLVIHSKLLGHNKSIQWMTLCGSSNSNGNSELSGSRVWSLDSHGMARIWDSQNQQFIKEVEVVDQSKGGGGAVYQMISTTVNNTVWTATSQKLAIWDIDGGLIGEIPGESYSLCESQNKEIWVGGPQVLNIYSLDGIPSIAPSNCTSDDNNSNGAGGGELLKPIGTNLFMKGIIILAMCKVGQNRIWGCSSEKTLYVWDTKTKETIHQCEIQEKRPKRMACIEIDDTEYIWIGGDEGSIQIFNSKTFKLEHKILNQGWDKIFHIASINREIWIGFWDTTVRVFPGDPKNKEILIDYKGYHSDVVSSIIEVPNLKGGDPFVWFGSYDKSISIVSIKEDTAKSWNFTNIKKNFTRPIRQGFSSRG.

One can recognise a Rho-GAP domain in the interval 141–339; that stretch reads ISLDTLIAKE…QMILHYDTLF (199 aa). WD repeat units follow at residues 381 to 430, 539 to 579, and 585 to 623; these read GHNK…FIKE, LFMK…TIHQ, and KRPKRMACIEIDDTEYIWIGGDEGSIQIFNSKTFKLEHK.

It localises to the cytoplasm. Rho GTPase-activating protein involved in the signal transduction pathway. This is Rho GTPase-activating protein gacL (gacL) from Dictyostelium discoideum (Social amoeba).